A 319-amino-acid chain; its full sequence is GTP 3',8-cyclase (319 aa).

A Radical SAM core domain is found at 4-227 (KHGRKINYLR…VETDKSSTAL (224 aa)). Arginine 13 serves as a coordination point for GTP. The [4Fe-4S] cluster site is built by cysteine 20 and cysteine 24. Tyrosine 26 contacts S-adenosyl-L-methionine. Residue cysteine 27 coordinates [4Fe-4S] cluster. Residue arginine 63 participates in GTP binding. Position 67 (glycine 67) interacts with S-adenosyl-L-methionine. Threonine 94 is a GTP binding site. Residue serine 118 coordinates S-adenosyl-L-methionine. Lysine 155 serves as a coordination point for GTP. Position 189 (methionine 189) interacts with S-adenosyl-L-methionine. Residues cysteine 249 and cysteine 252 each contribute to the [4Fe-4S] cluster site. 254-256 (RVR) contacts GTP. Cysteine 266 is a [4Fe-4S] cluster binding site.

It belongs to the radical SAM superfamily. MoaA family. As to quaternary structure, monomer and homodimer. [4Fe-4S] cluster is required as a cofactor.

It carries out the reaction GTP + AH2 + S-adenosyl-L-methionine = (8S)-3',8-cyclo-7,8-dihydroguanosine 5'-triphosphate + 5'-deoxyadenosine + L-methionine + A + H(+). It functions in the pathway cofactor biosynthesis; molybdopterin biosynthesis. Catalyzes the cyclization of GTP to (8S)-3',8-cyclo-7,8-dihydroguanosine 5'-triphosphate. This is GTP 3',8-cyclase from Clostridium botulinum (strain Langeland / NCTC 10281 / Type F).